A 475-amino-acid polypeptide reads, in one-letter code: UDP-N-acetylmuramoylalanine--D-glutamate ligase (475 aa).

Position 130–136 (130–136 (GTNGKTT)) interacts with ATP.

This sequence belongs to the MurCDEF family.

Its subcellular location is the cytoplasm. The catalysed reaction is UDP-N-acetyl-alpha-D-muramoyl-L-alanine + D-glutamate + ATP = UDP-N-acetyl-alpha-D-muramoyl-L-alanyl-D-glutamate + ADP + phosphate + H(+). The protein operates within cell wall biogenesis; peptidoglycan biosynthesis. Cell wall formation. Catalyzes the addition of glutamate to the nucleotide precursor UDP-N-acetylmuramoyl-L-alanine (UMA). The sequence is that of UDP-N-acetylmuramoylalanine--D-glutamate ligase from Corynebacterium diphtheriae (strain ATCC 700971 / NCTC 13129 / Biotype gravis).